The sequence spans 341 residues: Methionine import ATP-binding protein MetN 2 (341 aa).

The 240-residue stretch at 2–241 (ILLENVKKIY…PQQDITKRFV (240 aa)) folds into the ABC transporter domain. ATP is bound at residue 38 to 45 (GYSGAGKS).

The protein belongs to the ABC transporter superfamily. Methionine importer (TC 3.A.1.24) family. In terms of assembly, the complex is composed of two ATP-binding proteins (MetN), two transmembrane proteins (MetI) and a solute-binding protein (MetQ).

It localises to the cell membrane. It carries out the reaction L-methionine(out) + ATP + H2O = L-methionine(in) + ADP + phosphate + H(+). The enzyme catalyses D-methionine(out) + ATP + H2O = D-methionine(in) + ADP + phosphate + H(+). Part of the ABC transporter complex MetNIQ involved in methionine import. Responsible for energy coupling to the transport system. The polypeptide is Methionine import ATP-binding protein MetN 2 (Bacillus thuringiensis subsp. konkukian (strain 97-27)).